The following is a 162-amino-acid chain: Ribosome-binding factor A (162 aa).

The interval 121–162 (DEVARVAAGASPAGDPDPYKEPRAEDADDAEVDEPSGSRQAD) is disordered. Residues 125–136 (RVAAGASPAGDP) show a composition bias toward low complexity.

It belongs to the RbfA family. As to quaternary structure, monomer. Binds 30S ribosomal subunits, but not 50S ribosomal subunits or 70S ribosomes.

Its subcellular location is the cytoplasm. Its function is as follows. One of several proteins that assist in the late maturation steps of the functional core of the 30S ribosomal subunit. Associates with free 30S ribosomal subunits (but not with 30S subunits that are part of 70S ribosomes or polysomes). Required for efficient processing of 16S rRNA. May interact with the 5'-terminal helix region of 16S rRNA. The polypeptide is Ribosome-binding factor A (Rhodococcus jostii (strain RHA1)).